The primary structure comprises 177 residues: MIGILNRWRQFGRRYFWPHLLLGMVAASLGVPSNLSGVPDHAALANTSSSQSRQNHGTTNFNSLALLHDIHRRPSFSVDYWQQHALRTVIRHLSFALAPQAAYARVQEVAETERVAPSKIQQLALLDTLNALLTHEFKPPAIIRYTEQVERPVLSPYKPGLWLAQVQGIRAGPANLS.

Residues Met-1–Gly-37 form the signal peptide.

The protein belongs to the SecM family.

It localises to the cytoplasm. The protein resides in the cytosol. Its subcellular location is the periplasm. Its function is as follows. Regulates secA expression by translational coupling of the secM secA operon. Translational pausing at a specific Pro residue 5 residues before the end of the protein may allow disruption of a mRNA repressor helix that normally suppresses secA translation initiation. This chain is Secretion monitor, found in Yersinia pseudotuberculosis serotype O:1b (strain IP 31758).